A 252-amino-acid chain; its full sequence is Trans-aconitate 2-methyltransferase (252 aa).

This sequence belongs to the methyltransferase superfamily. Tam family.

It is found in the cytoplasm. It carries out the reaction trans-aconitate + S-adenosyl-L-methionine = (E)-3-(methoxycarbonyl)pent-2-enedioate + S-adenosyl-L-homocysteine. Catalyzes the S-adenosylmethionine monomethyl esterification of trans-aconitate. The chain is Trans-aconitate 2-methyltransferase from Escherichia coli O7:K1 (strain IAI39 / ExPEC).